Consider the following 321-residue polypeptide: Basic endochitinase A (321 aa).

The N-terminal stretch at 1 to 19 (MGAFALFAVLAMAVTMAVA) is a signal peptide. One can recognise a Chitin-binding type-1 domain in the interval 20–60 (EQCGSQAGGATCPNCLCCSRFGWCGSTSDYCGDGCQSQCAG). Cystine bridges form between C22–C37, C31–C43, C34–C61, C36–C50, and C54–C58. The interval 62–79 (GGGGTPVTPTPTPSGGGG) is hinge region (Gly/Pro/Thr-rich). A catalytic region spans residues 80 to 321 (VSSIVSRALF…LDCYNQRPFA (242 aa)). Cystine bridges form between C101–C163, C175–C183, and C301–C314. Catalysis depends on E145, which acts as the Proton donor.

The protein belongs to the glycosyl hydrolase 19 family. Chitinase class I subfamily. As to expression, localized in the aleurone cells of the seed endosperm (at protein level).

The enzyme catalyses Random endo-hydrolysis of N-acetyl-beta-D-glucosaminide (1-&gt;4)-beta-linkages in chitin and chitodextrins.. Defense against chitin-containing fungal pathogens. Binds the hyphal tips, lateral walls and septa of fungi and degrades mature chitin. In Secale cereale (Rye), this protein is Basic endochitinase A.